A 388-amino-acid polypeptide reads, in one-letter code: Oligogalacturonate lyase (388 aa).

The protein resides in the periplasm. The enzyme catalyses 4-(4-deoxy-alpha-D-galact-4-enuronosyl)-D-galacturonate = 2 5-dehydro-4-deoxy-D-glucuronate. Its pathway is glycan metabolism; pectin degradation; 2-dehydro-3-deoxy-D-gluconate from pectin: step 3/5. In terms of biological role, involved in degradation of pectin, which causes soft-rod disease in plants. In Dickeya dadantii (strain 3937) (Erwinia chrysanthemi (strain 3937)), this protein is Oligogalacturonate lyase (ogl).